Reading from the N-terminus, the 503-residue chain is Capsanthin/capsorubin synthase, chromoplastic (503 aa).

Residue 88 to 117 (VIIIGTGPAGLRLAEQVSSRHSVKVCCVDP) coordinates NAD(+).

Belongs to the lycopene cyclase family.

Its subcellular location is the plastid. It is found in the chromoplast. The catalysed reaction is all-trans-violaxanthin = all-trans-capsorubin. The enzyme catalyses all-trans-antheraxanthin = all-trans-capsanthin. It functions in the pathway carotenoid biosynthesis; capsanthin biosynthesis; capsanthin from antheraxanthin: step 1/1. Its pathway is carotenoid biosynthesis; capsorubin biosynthesis; capsorubin from violaxanthin: step 1/1. Its function is as follows. Catalyzes the conversion of the ubiquitous 5,6-epoxycarotenoids, antheraxanthin and violaxanthin, into capsanthin and capsorubin, respectively. The sequence is that of Capsanthin/capsorubin synthase, chromoplastic (CCS) from Citrus sinensis (Sweet orange).